Reading from the N-terminus, the 85-residue chain is MDISRTEQRILHLMAQGGRIEITRDDDRKIEAVSCFTRDGWLYPGVDLDLFRRLKRLRAIKSSGGQPYRITERGLRLVRSQLNNR.

The protein belongs to the UPF0386 family.

In Rhizobium johnstonii (strain DSM 114642 / LMG 32736 / 3841) (Rhizobium leguminosarum bv. viciae), this protein is UPF0386 protein RL2079.